The primary structure comprises 414 residues: Serine/threonine transporter SstT (414 aa).

Transmembrane regions (helical) follow at residues 19-39 (IIVGLVLGVVTALISPDLEPV), 55-75 (FVKGLRAVAPILIFVLVIAAI), 89-109 (IVMLYIIGTFGASIVAVLASF), 148-168 (ALATSNFIGILAWAIALGIAL), 189-209 (IVHLVISLAPFGIFGLVAATL), 223-243 (LLLVLLGSMLFMALVVNPFIV), 297-317 (IPLGATINMAGAAITVTVLTL), 323-343 (LGIPVSIPTAILLSVVSAVCA), and 363-383 (LFGISGDVAAQVIAVGFVIGV).

Belongs to the dicarboxylate/amino acid:cation symporter (DAACS) (TC 2.A.23) family.

It is found in the cell inner membrane. It catalyses the reaction L-serine(in) + Na(+)(in) = L-serine(out) + Na(+)(out). It carries out the reaction L-threonine(in) + Na(+)(in) = L-threonine(out) + Na(+)(out). Its function is as follows. Involved in the import of serine and threonine into the cell, with the concomitant import of sodium (symport system). This is Serine/threonine transporter SstT from Actinobacillus succinogenes (strain ATCC 55618 / DSM 22257 / CCUG 43843 / 130Z).